We begin with the raw amino-acid sequence, 336 residues long: Retinol dehydrogenase 14 (336 aa).

T5 carries the post-translational modification Phosphothreonine. An NADP(+)-binding site is contributed by 50–56 (GANSGLG). Residue S192 participates in substrate binding. Y217 (proton acceptor) is an active-site residue.

It belongs to the short-chain dehydrogenases/reductases (SDR) family. Widely expressed.

The enzyme catalyses all-trans-retinol + NADP(+) = all-trans-retinal + NADPH + H(+). It carries out the reaction 9-cis-retinol + NADP(+) = 9-cis-retinal + NADPH + H(+). It catalyses the reaction 11-cis-retinol + NADP(+) = 11-cis-retinal + NADPH + H(+). It participates in cofactor metabolism; retinol metabolism. Functionally, retinol dehydrogenase with a clear preference for NADP. Displays high activity towards 9-cis, 11-cis and all-trans-retinol. Shows a very weak activity towards 13-cis-retinol. Has no activity towards steroid. This Homo sapiens (Human) protein is Retinol dehydrogenase 14 (RDH14).